A 130-amino-acid polypeptide reads, in one-letter code: MAATQYYGTGRRKTSTARVFAKVGTGNITVNKLPLDEYFGRETSRMVVRQPLELVEMTEKLDINVTVKGGGNTGQAGAIRHGITRALMELDESLRPSLRAAGFVTRDARKVERKKVGLRKARRKPQFSKR.

The protein belongs to the universal ribosomal protein uS9 family.

This chain is Small ribosomal subunit protein uS9, found in Shewanella piezotolerans (strain WP3 / JCM 13877).